A 378-amino-acid chain; its full sequence is UDP-4-amino-4-deoxy-L-arabinose--oxoglutarate aminotransferase (378 aa).

Residue Lys182 is modified to N6-(pyridoxal phosphate)lysine.

It belongs to the DegT/DnrJ/EryC1 family. ArnB subfamily. Homodimer. It depends on pyridoxal 5'-phosphate as a cofactor.

It carries out the reaction UDP-4-amino-4-deoxy-beta-L-arabinose + 2-oxoglutarate = UDP-beta-L-threo-pentopyranos-4-ulose + L-glutamate. It functions in the pathway nucleotide-sugar biosynthesis; UDP-4-deoxy-4-formamido-beta-L-arabinose biosynthesis; UDP-4-deoxy-4-formamido-beta-L-arabinose from UDP-alpha-D-glucuronate: step 2/3. It participates in bacterial outer membrane biogenesis; lipopolysaccharide biosynthesis. Its function is as follows. Catalyzes the conversion of UDP-4-keto-arabinose (UDP-Ara4O) to UDP-4-amino-4-deoxy-L-arabinose (UDP-L-Ara4N). The modified arabinose is attached to lipid A and is required for resistance to polymyxin and cationic antimicrobial peptides. The protein is UDP-4-amino-4-deoxy-L-arabinose--oxoglutarate aminotransferase of Aeromonas hydrophila subsp. hydrophila (strain ATCC 7966 / DSM 30187 / BCRC 13018 / CCUG 14551 / JCM 1027 / KCTC 2358 / NCIMB 9240 / NCTC 8049).